Consider the following 281-residue polypeptide: Putative dehydrogenase/reductase SDR family member 4-like 1 (281 aa).

Residue 36 to 60 coordinates NADP(+); that stretch reads LVTASTDWIGFAVAQRLAQDGAHVV. A substrate-binding site is contributed by Ser-172. Tyr-185 (proton acceptor) is an active-site residue. NADP(+) is bound at residue Lys-189. The Peroxisomal targeting signal motif lies at 279 to 281; that stretch reads SRL.

It belongs to the short-chain dehydrogenases/reductases (SDR) family.

Its function is as follows. Putative oxidoreductase. This chain is Putative dehydrogenase/reductase SDR family member 4-like 1, found in Homo sapiens (Human).